The following is a 376-amino-acid chain: Chaperone protein DnaJ (376 aa).

The J domain occupies 5 to 70 (DYYEVLGLSK…QKKANYDQFG (66 aa)). A CR-type zinc finger spans residues 133-215 (GVEKEISITR…CHGKGTVRKN (83 aa)). Positions 146, 149, 163, 166, 189, 192, 203, and 206 each coordinate Zn(2+). CXXCXGXG motif repeat units lie at residues 146–153 (CDTCAGSG), 163–170 (CDKCGGTG), 189–196 (CDKCGGSG), and 203–210 (CTTCHGKG).

The protein belongs to the DnaJ family. Homodimer. Zn(2+) is required as a cofactor.

The protein localises to the cytoplasm. Participates actively in the response to hyperosmotic and heat shock by preventing the aggregation of stress-denatured proteins and by disaggregating proteins, also in an autonomous, DnaK-independent fashion. Unfolded proteins bind initially to DnaJ; upon interaction with the DnaJ-bound protein, DnaK hydrolyzes its bound ATP, resulting in the formation of a stable complex. GrpE releases ADP from DnaK; ATP binding to DnaK triggers the release of the substrate protein, thus completing the reaction cycle. Several rounds of ATP-dependent interactions between DnaJ, DnaK and GrpE are required for fully efficient folding. Also involved, together with DnaK and GrpE, in the DNA replication of plasmids through activation of initiation proteins. This chain is Chaperone protein DnaJ, found in Clostridium novyi (strain NT).